Reading from the N-terminus, the 55-residue chain is Large ribosomal subunit protein bL33 (55 aa).

This sequence belongs to the bacterial ribosomal protein bL33 family.

The sequence is that of Large ribosomal subunit protein bL33 from Bradyrhizobium diazoefficiens (strain JCM 10833 / BCRC 13528 / IAM 13628 / NBRC 14792 / USDA 110).